Here is a 469-residue protein sequence, read N- to C-terminus: D-3-phosphoglycerate dehydrogenase 1 (469 aa).

A phosphoserine mark is found at Ser-22, Ser-29, and Ser-33. NAD(+)-binding positions include 208–209, Asp-228, 285–287, and Asp-311; these read HI and ASR. Residue Arg-287 is part of the active site. Residue Glu-316 is part of the active site. The Proton donor role is filled by His-347. 347–350 is an NAD(+) binding site; the sequence is HIGG. The ACT domain occupies 399 to 469; sequence RVLYIHQNVP…SAKISIRLLY (71 aa).

Belongs to the D-isomer specific 2-hydroxyacid dehydrogenase family.

The enzyme catalyses (2R)-3-phosphoglycerate + NAD(+) = 3-phosphooxypyruvate + NADH + H(+). It catalyses the reaction (R)-2-hydroxyglutarate + NAD(+) = 2-oxoglutarate + NADH + H(+). Its pathway is amino-acid biosynthesis; L-serine biosynthesis; L-serine from 3-phospho-D-glycerate: step 1/3. Catalyzes the reversible oxidation of 3-phospho-D-glycerate to 3-phosphonooxypyruvate, the first step of the phosphorylated L-serine biosynthesis pathway. Also catalyzes the reversible oxidation of 2-hydroxyglutarate to 2-oxoglutarate. The chain is D-3-phosphoglycerate dehydrogenase 1 (SER3) from Saccharomyces cerevisiae (strain ATCC 204508 / S288c) (Baker's yeast).